A 165-amino-acid polypeptide reads, in one-letter code: Phosphopantetheine adenylyltransferase (165 aa).

Residue S10 coordinates substrate. Residues 10 to 11 (SF) and H18 each bind ATP. Residues K42, L74, and R88 each contribute to the substrate site. ATP is bound by residues 89-91 (GLR), E99, and 124-130 (YSFISSS).

Belongs to the bacterial CoaD family. As to quaternary structure, homohexamer. Mg(2+) serves as cofactor.

The protein resides in the cytoplasm. It carries out the reaction (R)-4'-phosphopantetheine + ATP + H(+) = 3'-dephospho-CoA + diphosphate. The protein operates within cofactor biosynthesis; coenzyme A biosynthesis; CoA from (R)-pantothenate: step 4/5. In terms of biological role, reversibly transfers an adenylyl group from ATP to 4'-phosphopantetheine, yielding dephospho-CoA (dPCoA) and pyrophosphate. This Macrococcus caseolyticus (strain JCSC5402) (Macrococcoides caseolyticum) protein is Phosphopantetheine adenylyltransferase.